The chain runs to 764 residues: Oxysterol-binding protein-related protein 10 (764 aa).

Positions 1–74 (MERAVQGTDG…PSGGGGRRRE (74 aa)) are disordered. 2 stretches are compositionally biased toward low complexity: residues 15-47 (NSSS…SAAA) and 55-65 (RSSPGSVAASP). 2 positions are modified to phosphoserine: Ser29 and Ser30. Arg38 bears the Omega-N-methylarginine mark. Residues Ser57, Ser60, and Ser64 each carry the phosphoserine modification. Positions 74–171 (EPALEGVLSK…WVTQLRACAK (98 aa)) constitute a PH domain. Thr196 is modified (phosphothreonine). Ser201, Ser209, and Ser223 each carry phosphoserine. Disordered stretches follow at residues 304 to 335 (GQPS…NGTL) and 354 to 391 (AEDE…TELG). Positions 359-370 (TSQPEPEPNSGS) are enriched in polar residues. The span at 374 to 389 (LSEDEKSDNEDKEETE) shows a compositional bias: acidic residues. Residues 413-418 (LTKVVL) and 477-480 (KPYN) contribute to the a 1,2-diacyl-sn-glycero-3-phospho-(1D-myo-inositol 4-phosphate) site. A 1,2-diacyl-sn-glycero-3-phospho-L-serine contacts are provided by residues 413 to 418 (LTKVVL) and Asn480. The tract at residues 501 to 520 (KRTASRSPASCHEHPMADDP) is disordered. Residues 511–520 (CHEHPMADDP) are compositionally biased toward basic and acidic residues. An a 1,2-diacyl-sn-glycero-3-phospho-(1D-myo-inositol 4-phosphate)-binding site is contributed by 535–536 (HH). Ser561 lines the a 1,2-diacyl-sn-glycero-3-phospho-L-serine pocket. Residues 713–740 (DIDAATEQKRHLEEKQRVEERKRENLRT) adopt a coiled-coil conformation. Residues Lys721, Glu725, and Arg729 each coordinate a 1,2-diacyl-sn-glycero-3-phospho-(1D-myo-inositol 4-phosphate).

It belongs to the OSBP family. As to quaternary structure, interacts with OSBPL9. Interacts with DIAPH1.

It localises to the cytoplasm. Its subcellular location is the cytoskeleton. Its function is as follows. Probable lipid transporter involved in lipid countertransport between the endoplasmic reticulum and the plasma membrane. Its ability to bind phosphatidylserine, suggests that it specifically exchanges phosphatidylserine with phosphatidylinositol 4-phosphate (PI4P), delivering phosphatidylserine to the plasma membrane in exchange for PI4P. Plays a role in negative regulation of lipid biosynthesis. Negatively regulates APOB secretion from hepatocytes. Binds cholesterol and acidic phospholipids. Also binds 25-hydroxycholesterol. Binds phosphatidylserine. The chain is Oxysterol-binding protein-related protein 10 (OSBPL10) from Homo sapiens (Human).